Reading from the N-terminus, the 175-residue chain is MNATCCILALLLCLTQAISGCYCQGTLIEEIENLKKHFNSSSSDVGDGGELVLDIWRNWQKDGDIKIIESQIISFYFKLFDALKDNQAIQESIGTIEQDLLVHFFNSSEEKRDDFMKVMKIPVDDPQVQRKAVNELLGVMYRLSPKNSLRKRKRSRCCFGGGARPNKNNAASKTI.

An N-terminal signal peptide occupies residues 1-23; that stretch reads MNATCCILALLLCLTQAISGCYC. Gln-24 is subject to Pyrrolidone carboxylic acid. Residues Asn-39 and Asn-106 are each glycosylated (N-linked (GlcNAc...) asparagine).

This sequence belongs to the type II (or gamma) interferon family. In terms of assembly, homodimer. Interacts with IFNGR1 (via extracellular domain); this interaction promotes IFNGR1 dimerization. Released primarily from activated T lymphocytes.

Its subcellular location is the secreted. Its function is as follows. Type II interferon produced by immune cells such as T-cells and NK cells that plays crucial roles in antimicrobial, antiviral, and antitumor responses by activating effector immune cells and enhancing antigen presentation. Primarily signals through the JAK-STAT pathway after interaction with its receptor IFNGR1 to affect gene regulation. Upon IFNG binding, IFNGR1 intracellular domain opens out to allow association of downstream signaling components JAK2, JAK1 and STAT1, leading to STAT1 activation, nuclear translocation and transcription of IFNG-regulated genes. Many of the induced genes are transcription factors such as IRF1 that are able to further drive regulation of a next wave of transcription. Plays a role in class I antigen presentation pathway by inducing a replacement of catalytic proteasome subunits with immunoproteasome subunits. In turn, increases the quantity, quality, and repertoire of peptides for class I MHC loading. Increases the efficiency of peptide generation also by inducing the expression of activator PA28 that associates with the proteasome and alters its proteolytic cleavage preference. Up-regulates as well MHC II complexes on the cell surface by promoting expression of several key molecules such as cathepsins B/CTSB, H/CTSH, and L/CTSL. Participates in the regulation of hematopoietic stem cells during development and under homeostatic conditions by affecting their development, quiescence, and differentiation. This chain is Interferon gamma (IFNG), found in Peromyscus maniculatus (North American deer mouse).